Consider the following 251-residue polypeptide: Flagellar basal-body rod protein FlgF (251 aa).

It belongs to the flagella basal body rod proteins family. As to quaternary structure, the basal body constitutes a major portion of the flagellar organelle and consists of five rings (E,L,P,S, and M) mounted on a central rod. The rod consists of about 26 subunits of FlgG in the distal portion, and FlgB, FlgC and FlgF are thought to build up the proximal portion of the rod with about 6 subunits each.

It is found in the bacterial flagellum basal body. This Escherichia coli (strain K12) protein is Flagellar basal-body rod protein FlgF (flgF).